A 224-amino-acid chain; its full sequence is Putative endoglucanase X (224 aa).

Residues 147–168 form a disordered region; that stretch reads QTQPTPSPSPTPTDSPLVKKGD. Residues 162–224 enclose the Dockerin domain; the sequence is PLVKKGDVNL…SILKRILLRN (63 aa).

The enzyme catalyses Endohydrolysis of (1-&gt;4)-beta-D-glucosidic linkages in cellulose, lichenin and cereal beta-D-glucans.. Functionally, this enzyme catalyzes the endohydrolysis of 1,4-beta-glucosidic linkages in cellulose, lichenin and cereal beta-D-glucans. The polypeptide is Putative endoglucanase X (celX) (Acetivibrio thermocellus (Hungateiclostridium thermocellum)).